We begin with the raw amino-acid sequence, 290 residues long: 33 kDa chaperonin (290 aa).

2 cysteine pairs are disulfide-bonded: Cys235/Cys237 and Cys268/Cys271.

This sequence belongs to the HSP33 family. Post-translationally, under oxidizing conditions two disulfide bonds are formed involving the reactive cysteines. Under reducing conditions zinc is bound to the reactive cysteines and the protein is inactive.

The protein resides in the cytoplasm. Its function is as follows. Redox regulated molecular chaperone. Protects both thermally unfolding and oxidatively damaged proteins from irreversible aggregation. Plays an important role in the bacterial defense system toward oxidative stress. This Streptococcus gordonii (strain Challis / ATCC 35105 / BCRC 15272 / CH1 / DL1 / V288) protein is 33 kDa chaperonin.